A 142-amino-acid polypeptide reads, in one-letter code: MPTPSMEDYIEKIYSLIETKGYARVSDIADELFVHPSSVTKMVQKLDKDEYLIYEKYRGLILTPKGTQMGKRLLERHALLESFLSIIGVDSSHIYHDVEGIEHHLSWNSIDRIGNVVQFFENHPDALEALKAMETTKPETNE.

An HTH dtxR-type domain is found at 1-63 (MPTPSMEDYI…YEKYRGLILT (63 aa)). Positions 8, 11, 77, 99, 102, and 103 each coordinate Mn(2+).

This sequence belongs to the DtxR/MntR family. In terms of assembly, homodimer.

The protein resides in the cytoplasm. Its activity is regulated as follows. DNA binding is strongly activated by Mn(2+). Functionally, central regulator of manganese homeostasis. The sequence is that of HTH-type transcriptional regulator MntR from Listeria welshimeri serovar 6b (strain ATCC 35897 / DSM 20650 / CCUG 15529 / CIP 8149 / NCTC 11857 / SLCC 5334 / V8).